We begin with the raw amino-acid sequence, 393 residues long: Probable acetyl-CoA acetyltransferase (393 aa).

The Acyl-thioester intermediate role is filled by Cys88. Residues His348 and Cys378 each act as proton acceptor in the active site.

Belongs to the thiolase-like superfamily. Thiolase family.

The protein localises to the cytoplasm. The catalysed reaction is 2 acetyl-CoA = acetoacetyl-CoA + CoA. The polypeptide is Probable acetyl-CoA acetyltransferase (yqeF) (Escherichia coli (strain K12)).